We begin with the raw amino-acid sequence, 1102 residues long: WASH complex subunit 4 (1102 aa).

It belongs to the SWIP family. In terms of assembly, component of the WASH complex.

The protein resides in the early endosome. Acts at least in part as component of the WASH complex which may regulate wash nucleation-promoting factor (NPF) activity and is required for its membrane targeting during endosomal sorting. During embryogenesis, not involved in the wash-dependent developmental migration of hemocytes anteriorly from the tail. The polypeptide is WASH complex subunit 4 (Drosophila melanogaster (Fruit fly)).